The primary structure comprises 386 residues: Succinate--CoA ligase [ADP-forming] subunit beta (386 aa).

The ATP-grasp domain occupies 9–244 (KDLLTAYQLP…PSQENIRDVL (236 aa)). ATP-binding positions include Lys46, 53–55 (GRG), Val102, and Glu107. Residues Asn199 and Asp213 each coordinate Mg(2+). Residues Asn264 and 321 to 323 (GIM) contribute to the substrate site.

It belongs to the succinate/malate CoA ligase beta subunit family. Heterotetramer of two alpha and two beta subunits. It depends on Mg(2+) as a cofactor.

It carries out the reaction succinate + ATP + CoA = succinyl-CoA + ADP + phosphate. The catalysed reaction is GTP + succinate + CoA = succinyl-CoA + GDP + phosphate. It functions in the pathway carbohydrate metabolism; tricarboxylic acid cycle; succinate from succinyl-CoA (ligase route): step 1/1. Its function is as follows. Succinyl-CoA synthetase functions in the citric acid cycle (TCA), coupling the hydrolysis of succinyl-CoA to the synthesis of either ATP or GTP and thus represents the only step of substrate-level phosphorylation in the TCA. The beta subunit provides nucleotide specificity of the enzyme and binds the substrate succinate, while the binding sites for coenzyme A and phosphate are found in the alpha subunit. The sequence is that of Succinate--CoA ligase [ADP-forming] subunit beta from Chlamydia trachomatis serovar L2 (strain ATCC VR-902B / DSM 19102 / 434/Bu).